The following is a 500-amino-acid chain: AMP phosphorylase (500 aa).

Residues G166, 192 to 197 (SRAVTS), and T201 each bind AMP. D254 (proton donor) is an active-site residue. S262 and K286 together coordinate AMP.

Belongs to the thymidine/pyrimidine-nucleoside phosphorylase family. Type 2 subfamily.

The catalysed reaction is AMP + phosphate = alpha-D-ribose 1,5-bisphosphate + adenine. The enzyme catalyses CMP + phosphate = cytosine + alpha-D-ribose 1,5-bisphosphate. It carries out the reaction UMP + phosphate = alpha-D-ribose 1,5-bisphosphate + uracil. Catalyzes the conversion of AMP and phosphate to adenine and ribose 1,5-bisphosphate (R15P). Exhibits phosphorylase activity toward CMP and UMP in addition to AMP. Functions in an archaeal AMP degradation pathway, together with R15P isomerase and RubisCO. This Natronomonas pharaonis (strain ATCC 35678 / DSM 2160 / CIP 103997 / JCM 8858 / NBRC 14720 / NCIMB 2260 / Gabara) (Halobacterium pharaonis) protein is AMP phosphorylase (deoA).